We begin with the raw amino-acid sequence, 628 residues long: Monoterpene synthase like 2, chloroplastic (628 aa).

D379, D383, and D531 together coordinate Mg(2+). A DDXXD motif motif is present at residues 379–383 (DDIYD).

Belongs to the terpene synthase family. Tpsd subfamily. Mg(2+) is required as a cofactor. Mn(2+) serves as cofactor.

The protein localises to the plastid. Its subcellular location is the chloroplast. It functions in the pathway terpene metabolism; oleoresin biosynthesis. The protein operates within secondary metabolite biosynthesis; terpenoid biosynthesis. Functionally, monoterpene synthase (TPS) involved in the biosynthesis of monoterpene natural products included in conifer oleoresin secretions and volatile emissions; these compounds contribute to biotic and abiotic stress defense against herbivores and pathogens. This chain is Monoterpene synthase like 2, chloroplastic, found in Pinus banksiana (Jack pine).